Consider the following 1135-residue polypeptide: uncharacterized protein (1135 aa).

The N-terminal stretch at 1-28 (MALFPRGILIALVLSFVLNLGLVTKIHA) is a signal peptide. A run of 7 helical transmembrane segments spans residues 332 to 352 (IVTA…LLAG), 359 to 379 (EYIN…GINI), 393 to 413 (MIQW…NWVM), 495 to 515 (MLVS…AFMV), 522 to 542 (MISI…FLFA), 555 to 575 (MISF…MFAV), and 700 to 720 (IKNI…MYNF).

Belongs to the TrbL/VirB6 family.

Its subcellular location is the cell membrane. This is an uncharacterized protein from Rickettsia typhi (strain ATCC VR-144 / Wilmington).